The sequence spans 412 residues: uncharacterized protein (412 aa).

Histidine 49 is a Zn(2+) binding site. Glutamate 52 acts as the Proton acceptor in catalysis. Zn(2+)-binding residues include histidine 53 and glutamate 129.

Belongs to the peptidase M16 family. Zn(2+) serves as cofactor.

This is an uncharacterized protein from Rickettsia bellii (strain RML369-C).